A 202-amino-acid polypeptide reads, in one-letter code: LexA repressor (202 aa).

The segment at residues R28–K48 is a DNA-binding region (H-T-H motif). Active-site for autocatalytic cleavage activity residues include S119 and K156.

Belongs to the peptidase S24 family. In terms of assembly, homodimer.

It carries out the reaction Hydrolysis of Ala-|-Gly bond in repressor LexA.. Functionally, represses a number of genes involved in the response to DNA damage (SOS response), including recA and lexA. Binds to the 16 bp palindromic sequence 5'-CTGTATATATATACAG-3'. In the presence of single-stranded DNA, RecA interacts with LexA causing an autocatalytic cleavage which disrupts the DNA-binding part of LexA, leading to derepression of the SOS regulon and eventually DNA repair. The sequence is that of LexA repressor from Escherichia coli (strain K12 / MC4100 / BW2952).